We begin with the raw amino-acid sequence, 311 residues long: Methionyl-tRNA formyltransferase (311 aa).

Residue 112-115 participates in (6S)-5,6,7,8-tetrahydrofolate binding; sequence SLLP.

This sequence belongs to the Fmt family.

The catalysed reaction is L-methionyl-tRNA(fMet) + (6R)-10-formyltetrahydrofolate = N-formyl-L-methionyl-tRNA(fMet) + (6S)-5,6,7,8-tetrahydrofolate + H(+). Functionally, attaches a formyl group to the free amino group of methionyl-tRNA(fMet). The formyl group appears to play a dual role in the initiator identity of N-formylmethionyl-tRNA by promoting its recognition by IF2 and preventing the misappropriation of this tRNA by the elongation apparatus. The protein is Methionyl-tRNA formyltransferase of Bradyrhizobium sp. (strain BTAi1 / ATCC BAA-1182).